Reading from the N-terminus, the 146-residue chain is Cytochrome b5 type B (146 aa).

A propeptide spanning residues 1-11 (MATPEASGSGR) is cleaved from the precursor. Residues 20 to 96 (VTYYRLEEVA…LKQYYIGDVH (77 aa)) form the Cytochrome b5 heme-binding domain. Lys-30 bears the N6-acetyllysine mark. Heme is bound by residues His-55 and His-79. Ser-80 carries the post-translational modification Phosphoserine. The helical transmembrane segment at 119 to 136 (WAYWIVPIVGAILIGFLY) threads the bilayer.

This sequence belongs to the cytochrome b5 family. Component of a complex composed of cytochrome b5, NADH-cytochrome b5 reductase (CYB5R3) and MTARC2.

The protein localises to the mitochondrion outer membrane. Its function is as follows. Cytochrome b5 is a membrane-bound hemoprotein functioning as an electron carrier for several membrane-bound oxygenases. This Rattus norvegicus (Rat) protein is Cytochrome b5 type B (Cyb5b).